Consider the following 239-residue polypeptide: Succinate dehydrogenase [ubiquinone] iron-sulfur subunit (239 aa).

The 2Fe-2S ferredoxin-type domain occupies 24–99; it reads AEAKFSVHPI…NANIITIYPL (76 aa). Residues Cys-63, Cys-68, Cys-71, and Cys-83 each coordinate [2Fe-2S] cluster. Residues 142 to 172 enclose the 4Fe-4S ferredoxin-type domain; it reads DRSELNGIYECILCACCSASCPSYWWNHDKY. Residues Cys-152, Cys-155, and Cys-158 each contribute to the [4Fe-4S] cluster site. Cys-162 contacts [3Fe-4S] cluster. A ubiquinone is bound at residue Trp-167. The [3Fe-4S] cluster site is built by Cys-209 and Cys-215. A [4Fe-4S] cluster-binding site is contributed by Cys-219.

Belongs to the succinate dehydrogenase/fumarate reductase iron-sulfur protein family. In terms of assembly, component of complex II composed of four subunits: a flavoprotein (FP), an iron-sulfur protein (IP), and a cytochrome b composed of a large and a small subunit. The cofactor is [2Fe-2S] cluster. It depends on [3Fe-4S] cluster as a cofactor. [4Fe-4S] cluster serves as cofactor.

It is found in the mitochondrion inner membrane. It carries out the reaction a quinone + succinate = fumarate + a quinol. Its pathway is carbohydrate metabolism; tricarboxylic acid cycle; fumarate from succinate (eukaryal route): step 1/1. In terms of biological role, iron-sulfur protein (IP) subunit of succinate dehydrogenase (SDH) that is involved in complex II of the mitochondrial electron transport chain and is responsible for transferring electrons from succinate to ubiquinone (coenzyme Q). This is Succinate dehydrogenase [ubiquinone] iron-sulfur subunit (SDH2) from Porphyra purpurea (Red seaweed).